The sequence spans 91 residues: Probable Fe(2+)-trafficking protein (91 aa).

It belongs to the Fe(2+)-trafficking protein family.

Functionally, could be a mediator in iron transactions between iron acquisition and iron-requiring processes, such as synthesis and/or repair of Fe-S clusters in biosynthetic enzymes. This chain is Probable Fe(2+)-trafficking protein, found in Cupriavidus metallidurans (strain ATCC 43123 / DSM 2839 / NBRC 102507 / CH34) (Ralstonia metallidurans).